The sequence spans 295 residues: 4-diphosphocytidyl-2-C-methyl-D-erythritol kinase (295 aa).

Lys18 is a catalytic residue. Position 101–111 (101–111 (PMGGGIGGGSS)) interacts with ATP. Asp143 is a catalytic residue.

The protein belongs to the GHMP kinase family. IspE subfamily.

It carries out the reaction 4-CDP-2-C-methyl-D-erythritol + ATP = 4-CDP-2-C-methyl-D-erythritol 2-phosphate + ADP + H(+). It participates in isoprenoid biosynthesis; isopentenyl diphosphate biosynthesis via DXP pathway; isopentenyl diphosphate from 1-deoxy-D-xylulose 5-phosphate: step 3/6. Catalyzes the phosphorylation of the position 2 hydroxy group of 4-diphosphocytidyl-2C-methyl-D-erythritol. The protein is 4-diphosphocytidyl-2-C-methyl-D-erythritol kinase of Vibrio vulnificus (strain YJ016).